Reading from the N-terminus, the 764-residue chain is Nucleolar transcription factor 1 (764 aa).

N-acetylmethionine is present on methionine 1. The disordered stretch occupies residues 1–21 (MNGEADCPTDLEMAAPKGQDR). 2 DNA-binding regions (HMG box) span residues 112–180 (PKKP…ARFR) and 196–264 (PEKP…RDYI). Position 201 is a phosphothreonine (threonine 201). 12 positions are modified to phosphoserine: serine 273, serine 336, serine 364, serine 389, serine 412, serine 433, serine 435, serine 484, serine 495, serine 546, serine 584, and serine 638. The segment at residues 298 to 362 (TKPPPNSYSL…DYEVELLRFL (65 aa)) is a DNA-binding region (HMG box 3). The disordered stretch occupies residues 381–411 (NINKKQATSPASKKPAQEGGKGGSEKPKRPV). DNA-binding regions (HMG box) lie at residues 407–475 (PKRP…GGER), 482–549 (PESP…SEMR), and 568–634 (KKPP…DLWV). Positions 459–487 (REAALKAQSERKPGGEREERGKLPESPKR) are disordered. Residues 546 to 576 (SEMRAPPAATNSSKKMKFQGEPKKPPMNGYQ) are disordered. The tract at residues 648–764 (YISNKRKSMT…SGDSSDSDSN (117 aa)) is disordered. Polar residues predominate over residues 664–674 (PKSSRTTLQSK). The segment covering 677–745 (SEEDDEEDED…DDDEDEDNES (69 aa)) has biased composition (acidic residues). Residues 746 to 758 (EGSSSSSSSSGDS) show a composition bias toward low complexity.

In terms of assembly, homodimer. Part of Pol I pre-initiation complex (PIC), in which Pol I core assembles with RRN3 and promoter-bound UTBF and SL1/TIF-IB complex. Interacts with TOP2A in the context of Pol I complex. Interacts with TBP. Interacts with TAF1A. Interacts with RASL11A. Binds to IRS1 and PIK3CA. Interacts with DHX33. Interacts with PHF6. Interacts with CEBPA (isoform 1 and isoform 4). Interacts with DDX11. Interacts with NOP53. Interacts with ALKBH2. Post-translationally, phosphorylated and activated by PIK3CA.

The protein resides in the nucleus. Its subcellular location is the nucleolus. Its function is as follows. Recognizes the ribosomal RNA gene promoter and activates transcription mediated by RNA polymerase I (Pol I) through cooperative interactions with the transcription factor SL1/TIF-IB complex. It binds specifically to the upstream control element and can activate Pol I promoter escape. This Homo sapiens (Human) protein is Nucleolar transcription factor 1 (UBTF).